The sequence spans 805 residues: Shutoff protein (805 aa).

Positions 1–88 are disordered; sequence MESVEKEDSL…QVGRGDQRHG (88 aa). The segment covering 18 to 29 has biased composition (polar residues); it reads TTASTDAANAPT. Composition is skewed to basic and acidic residues over residues 59–70 and 79–88; these read RSVPTEDKKQDQ and QVGRGDQRHG. The binding to host EIF4G stretch occupies residues 280–345; sequence VMSELIVRRA…AVLVTVELEC (66 aa). In terms of domain architecture, RRM spans 348–466; that stretch reads RFFADPEMQR…DLWTAFNERS (119 aa). 2 positions are modified to phosphotyrosine; by host: Tyr-365 and Tyr-682. A disordered region spans residues 684-805; it reads DPQSGEELNP…AGTACSPTQP (122 aa). Positions 726 to 742 are enriched in gly residues; it reads GRGGILGQSGRGGFGRG. Basic residues predominate over residues 754-763; sequence RSFRGRRGVR.

It belongs to the adenoviridae shutoff protein family. As to quaternary structure, monomer. Interacts with hexon protein; this interaction allows chaperoning and trimerization of hexon proteins. Interacts (via N-terminus) with host initiation factor EIF4G (via C-terminus). Interacts (via RRM domain) with viral mRNAs that contain the tripartite leader; this interaction allows ribosome shunting and expression of viral late mRNAs. Post-translationally, might be cleaved by the viral protease. In terms of processing, phosphorylated. Tyrosine phosphorylation enhances preferential binding to tripartite leader mRNAs and allows ribosome shunting. Methylated. Asymmetric dimethylation by host PRMT1 of the Arg/Gly-rich region may regulate shutoff protein binding to hexon and promote the capsid assembly in the nucleus.

The protein resides in the host cytoplasm. In terms of biological role, protein that inhibits host translation while promoting late viral translation by ribosome shunting. Blocks host cap-dependent translation by binding to eIF4G, displacing MKNK1 from cap initiation complexes and preventing EIF4E phosphorylation. Binds to the tripartite leader sequence of viral late mRNAs and recruits host eIF4G, PABPC1/poly-A binding protein and 40S ribosomes subunits on viral mRNAs, allowing ribosome shunting and efficient translation of late viral mRNAs even though conventional translation via ribosome scanning from the cap has been shut off in the host cell. During assembly, acts as a chaperone protein that helps hexon proteins assembly into trimers. In Homo sapiens (Human), this protein is Shutoff protein.